The primary structure comprises 108 residues: Large ribosomal subunit protein bL31B (108 aa).

The tract at residues 81-108 (KPAQPVQAPAEEGPVVKGKKKAPAKKKK) is disordered. Residues 97 to 108 (KGKKKAPAKKKK) are compositionally biased toward basic residues.

Belongs to the bacterial ribosomal protein bL31 family. Type B subfamily. In terms of assembly, part of the 50S ribosomal subunit.

This is Large ribosomal subunit protein bL31B from Chlamydia caviae (strain ATCC VR-813 / DSM 19441 / 03DC25 / GPIC) (Chlamydophila caviae).